The sequence spans 119 residues: MKALSPVRGCYEAVCCLSERSLAIARGRGKSPAAEEPLSLLDDMNHCYSRLRELVPGVPRGTQLSQVEILQRVIDYILDLQVVLAEPAPGPPDGPHLPIQTAELAPELVISNDQRSFCH.

One can recognise a bHLH domain in the interval 28-80; it reads RGKSPAAEEPLSLLDDMNHCYSRLRELVPGVPRGTQLSQVEILQRVIDYILDL.

As to quaternary structure, homodimer, and heterodimer with other HLH proteins. Interacts with COPS5 and COPS7A. Interacts with IFI204. Interacts with GATA4 and NKX2-5. Interacts with ANKRD2; both proteins cooperate in myoblast differentiation. Interacts with CLOCK and BMAL1.

It is found in the nucleus. In terms of biological role, transcriptional regulator (lacking a basic DNA binding domain) which negatively regulates the basic helix-loop-helix (bHLH) transcription factors by forming heterodimers and inhibiting their DNA binding and transcriptional activity. Implicated in regulating a variety of cellular processes, including cellular growth, senescence, differentiation, apoptosis, angiogenesis, and neoplastic transformation. Involved in myogenesis by inhibiting skeletal muscle and cardiac myocyte differentiation and promoting muscle precursor cells proliferation. Inhibits the binding of E2A-containing protein complexes to muscle creatine kinase E-box enhancer. Regulates the circadian clock by repressing the transcriptional activator activity of the CLOCK-BMAL1 heterodimer. The protein is DNA-binding protein inhibitor ID-3 (ID3) of Bos taurus (Bovine).